Consider the following 90-residue polypeptide: Mu-theraphotoxin-Phlo1b (90 aa).

The signal sequence occupies residues 1–22 (MKVSVLITLAVLGVMFVWTSAA). Positions 23–50 (EQEDHGSDRRDSPALLKSLGRVFQSEER) are excised as a propeptide. Disulfide bonds link cysteine 52/cysteine 66, cysteine 59/cysteine 71, and cysteine 65/cysteine 79. A Phenylalanine amide modification is found at phenylalanine 85. Positions 86–90 (GNEKS) are excised as a propeptide.

The protein belongs to the neurotoxin 10 (Hwtx-1) family. 39 (Jztx-34) subfamily. As to expression, expressed by the venom gland.

It localises to the secreted. Gating-modifier toxin that inhibits voltage-gated sodium channel Nav by shifting the threshold for channel activation to more positive potentials. This toxin moderately inhibits human Nav1.7/SCN9A (IC(50)=360 nM) and weakly inhibits hNav1.2/SCN2A (37% inhibition at 1 uM peptide) and hNav1.5/SCN5A (&lt;20% inhibition at 1 uM peptide). Inhibition of Nav1.7 is voltage-dependent, with lower inhibition at more positive test pulses. The sequence is that of Mu-theraphotoxin-Phlo1b from Phlogius sp. (Tarantula spider).